Here is a 308-residue protein sequence, read N- to C-terminus: Homoserine O-acetyltransferase (308 aa).

Cys142 acts as the Acyl-thioester intermediate in catalysis. Residues Lys163 and Ser192 each coordinate substrate. His235 (proton acceptor) is an active-site residue. Glu237 is an active-site residue. Arg249 serves as a coordination point for substrate.

It belongs to the MetA family.

Its subcellular location is the cytoplasm. The enzyme catalyses L-homoserine + acetyl-CoA = O-acetyl-L-homoserine + CoA. Its pathway is amino-acid biosynthesis; L-methionine biosynthesis via de novo pathway; O-acetyl-L-homoserine from L-homoserine: step 1/1. Transfers an acetyl group from acetyl-CoA to L-homoserine, forming acetyl-L-homoserine. The polypeptide is Homoserine O-acetyltransferase (Rhizobium rhizogenes (strain K84 / ATCC BAA-868) (Agrobacterium radiobacter)).